Here is a 238-residue protein sequence, read N- to C-terminus: ATP synthase subunit a (238 aa).

Helical transmembrane passes span 17–37, 75–95, 112–132, 172–192, and 194–214; these read LSNILMITVTCVIVLLIAIIC, FHVLGITILMFVFVANMLGLP, DPIVTLTLAIMVLGLTHYYGI, YGNIFAGEVLLTIIATQLAHI, and IFVGVLAIIPAIIWQAFSLFI.

This sequence belongs to the ATPase A chain family. In terms of assembly, F-type ATPases have 2 components, CF(1) - the catalytic core - and CF(0) - the membrane proton channel. CF(1) has five subunits: alpha(3), beta(3), gamma(1), delta(1), epsilon(1). CF(0) has three main subunits: a(1), b(2) and c(9-12). The alpha and beta chains form an alternating ring which encloses part of the gamma chain. CF(1) is attached to CF(0) by a central stalk formed by the gamma and epsilon chains, while a peripheral stalk is formed by the delta and b chains.

The protein localises to the cell membrane. Key component of the proton channel; it plays a direct role in the translocation of protons across the membrane. This chain is ATP synthase subunit a, found in Listeria monocytogenes serovar 1/2a (strain ATCC BAA-679 / EGD-e).